A 1282-amino-acid chain; its full sequence is Cytokine receptor (1282 aa).

An N-terminal signal peptide occupies residues 1–23; that stretch reads MVAQEQLVLLLMLLAGCRGGANA. Over 24-889 the chain is Extracellular; that stretch reads ILDPGWVIPS…CTPDTHSVKA (866 aa). N-linked (GlcNAc...) asparagine glycans are attached at residues Asn44, Asn86, Asn87, and Asn114. Residues Cys47 and Cys106 are joined by a disulfide bond. Fibronectin type-III domains follow at residues 124–220, 227–327, 329–431, 436–535, 537–631, 635–735, and 736–836; these read PLLV…NHFE, PGQN…TAPA, PRRP…SNRD, EPRN…KKDD, AKME…TGEA, QPRE…TAIG, and VPSP…LMST. Cys132 and Cys142 are oxidised to a cystine. 2 N-linked (GlcNAc...) asparagine glycosylation sites follow: Asn143 and Asn156. Cysteines 173 and 183 form a disulfide. 9 N-linked (GlcNAc...) asparagine glycosylation sites follow: Asn184, Asn230, Asn235, Asn278, Asn298, Asn310, Asn376, Asn448, and Asn466. Cys472 and Cys482 are joined by a disulfide. 8 N-linked (GlcNAc...) asparagine glycosylation sites follow: Asn568, Asn581, Asn626, Asn676, Asn703, Asn777, Asn790, and Asn862. The chain crosses the membrane as a helical span at residues 890–910; it reads MYQTIEVTVAILVLGVIFYLV. The Cytoplasmic segment spans residues 911 to 1282; it reads YKKYRKMSDI…NAMAHNRHVL (372 aa). Ser976 carries the phosphoserine modification. 2 disordered regions span residues 989–1092 and 1238–1258; these read TASS…HTFS and TVGSPTHAAGGAPGGGNQHSR. Basic and acidic residues-rich tracts occupy residues 999–1009 and 1033–1064; these read VDRDGYDDNHE and NDRERERERDREQEREREQQQQQRESEMDREQ.

This sequence belongs to the type I cytokine receptor family. As to quaternary structure, interacts with wdp; the interaction promotes internalization of dome and its subsequent lysosomal degradation; thereby reducing JAK/STAT signaling. In terms of processing, undergoes lysosomal degradation. In terms of tissue distribution, in stage 11 embryos, tracheal pits show highest expression, at stage 14 high expression is detected in the posterior spiracles, gut and head.

Its subcellular location is the apicolateral cell membrane. Functionally, critical for epithelial morphogenesis during oogenesis; border cell migration. Required in the germarium for the polarization of follicle cells during encapsulation of germline cells. Required for embryonic segmentation and trachea specification. Essential receptor molecule for upd and JAK/STAT signaling during oogenesis. In Drosophila melanogaster (Fruit fly), this protein is Cytokine receptor (dome).